Consider the following 314-residue polypeptide: tRNA pseudouridine synthase B (314 aa).

H43 provides a ligand contact to substrate. Catalysis depends on D48, which acts as the Nucleophile. 3 residues coordinate substrate: Y76, Y179, and L200.

It belongs to the pseudouridine synthase TruB family. Type 1 subfamily.

It catalyses the reaction uridine(55) in tRNA = pseudouridine(55) in tRNA. Its function is as follows. Responsible for synthesis of pseudouridine from uracil-55 in the psi GC loop of transfer RNAs. This chain is tRNA pseudouridine synthase B, found in Shigella boydii serotype 4 (strain Sb227).